The following is a 120-amino-acid chain: uncharacterized protein (120 aa).

A coiled-coil region spans residues 45–78 (QLISESLKIAQKDLMEVRKELRKRKIAIRETERD).

This is an uncharacterized protein from Bacillus subtilis (strain 168).